A 442-amino-acid polypeptide reads, in one-letter code: Probable carboxypeptidase PADG_04062 (442 aa).

The signal sequence occupies residues 1–20 (MKLQYLVALLSVQAVPPVTA). A glycan (N-linked (GlcNAc...) asparagine) is linked at Asn-102. Asp-160 contacts Zn(2+). The active-site Proton acceptor is Glu-192. Residue Glu-193 participates in Zn(2+) binding. Residue Asn-343 is glycosylated (N-linked (GlcNAc...) asparagine).

The protein belongs to the peptidase M20A family. The cofactor is Zn(2+).

It is found in the secreted. This is Probable carboxypeptidase PADG_04062 from Paracoccidioides brasiliensis (strain Pb18).